Consider the following 245-residue polypeptide: Myozenin-3 (245 aa).

Residue Ser31 is modified to Phosphoserine. A binding to ACTN2, PPP3CA and TCAP region spans residues Leu50 to Ser67. The binding to FLNC stretch occupies residues Ser67–Gln108. The tract at residues Asn93–Ala134 is disordered. A binding to ACTN2 region spans residues Pro180–Arg201.

This sequence belongs to the myozenin family. As to quaternary structure, interacts with ACTN2, LDB3, FLNC, PPP3CA and TCAP. Expressed specifically in skeletal muscle and is enriched in fast-twitch muscle fibers. Not detected in heart.

Its subcellular location is the cytoplasm. The protein resides in the myofibril. It localises to the sarcomere. It is found in the z line. Its function is as follows. Myozenins may serve as intracellular binding proteins involved in linking Z line proteins such as alpha-actinin, gamma-filamin, TCAP/telethonin, LDB3/ZASP and localizing calcineurin signaling to the sarcomere. Plays an important role in the modulation of calcineurin signaling. May play a role in myofibrillogenesis. This is Myozenin-3 from Mus musculus (Mouse).